The sequence spans 246 residues: Pyridoxine 5'-phosphate synthase (246 aa).

Residues Asn-8 and Arg-19 each contribute to the 3-amino-2-oxopropyl phosphate site. The active-site Proton acceptor is the His-44. Residues Arg-46 and His-51 each contribute to the 1-deoxy-D-xylulose 5-phosphate site. The Proton acceptor role is filled by Glu-76. A 1-deoxy-D-xylulose 5-phosphate-binding site is contributed by Thr-106. The active-site Proton donor is His-198. 3-amino-2-oxopropyl phosphate-binding positions include Asp-199 and 221-222; that span reads GH.

This sequence belongs to the PNP synthase family. As to quaternary structure, homooctamer; tetramer of dimers.

The protein resides in the cytoplasm. The enzyme catalyses 3-amino-2-oxopropyl phosphate + 1-deoxy-D-xylulose 5-phosphate = pyridoxine 5'-phosphate + phosphate + 2 H2O + H(+). Its pathway is cofactor biosynthesis; pyridoxine 5'-phosphate biosynthesis; pyridoxine 5'-phosphate from D-erythrose 4-phosphate: step 5/5. Functionally, catalyzes the complicated ring closure reaction between the two acyclic compounds 1-deoxy-D-xylulose-5-phosphate (DXP) and 3-amino-2-oxopropyl phosphate (1-amino-acetone-3-phosphate or AAP) to form pyridoxine 5'-phosphate (PNP) and inorganic phosphate. The chain is Pyridoxine 5'-phosphate synthase from Brucella suis (strain ATCC 23445 / NCTC 10510).